We begin with the raw amino-acid sequence, 319 residues long: NAP1-binding protein (319 aa).

Positions 34–43 (SALRSRRKQM) are enriched in basic residues. Residues 34–74 (SALRSRRKQMRPTGKSVLKRPRKVTDRKTEEKIRTNRRKTP) form a disordered region. Positions 56-67 (KVTDRKTEEKIR) are enriched in basic and acidic residues. Residues S251 and S260 each carry the phosphoserine modification. Residues 278–319 (EMQPLQENISPACPTPPYRSRETEKEDETLSPISVDFSSYLS) are disordered.

Interacts with NDC1 and MPS2.

In Saccharomyces cerevisiae (strain ATCC 204508 / S288c) (Baker's yeast), this protein is NAP1-binding protein (NBP1).